The sequence spans 131 residues: Large ribosomal subunit protein bL17 (131 aa).

Belongs to the bacterial ribosomal protein bL17 family. As to quaternary structure, part of the 50S ribosomal subunit. Contacts protein L32.

This is Large ribosomal subunit protein bL17 from Thermotoga sp. (strain RQ2).